A 205-amino-acid polypeptide reads, in one-letter code: Large ribosomal subunit protein uL3 (205 aa).

It belongs to the universal ribosomal protein uL3 family. As to quaternary structure, part of the 50S ribosomal subunit. Forms a cluster with proteins L14 and L19.

In terms of biological role, one of the primary rRNA binding proteins, it binds directly near the 3'-end of the 23S rRNA, where it nucleates assembly of the 50S subunit. This Bacteroides fragilis (strain ATCC 25285 / DSM 2151 / CCUG 4856 / JCM 11019 / LMG 10263 / NCTC 9343 / Onslow / VPI 2553 / EN-2) protein is Large ribosomal subunit protein uL3.